The chain runs to 490 residues: UDP-glycosyltransferase 86A1 (490 aa).

UDP-alpha-D-glucose-binding positions include serine 294, 352-354 (CCQ), 369-377 (HCGWNSILE), and 391-394 (LTDQ).

The protein belongs to the UDP-glycosyltransferase family.

In Arabidopsis thaliana (Mouse-ear cress), this protein is UDP-glycosyltransferase 86A1 (UGT86A1).